The primary structure comprises 504 residues: Aspartyl/glutamyl-tRNA(Asn/Gln) amidotransferase subunit B (504 aa).

It belongs to the GatB/GatE family. GatB subfamily. In terms of assembly, heterotrimer of A, B and C subunits.

It carries out the reaction L-glutamyl-tRNA(Gln) + L-glutamine + ATP + H2O = L-glutaminyl-tRNA(Gln) + L-glutamate + ADP + phosphate + H(+). The enzyme catalyses L-aspartyl-tRNA(Asn) + L-glutamine + ATP + H2O = L-asparaginyl-tRNA(Asn) + L-glutamate + ADP + phosphate + 2 H(+). Allows the formation of correctly charged Asn-tRNA(Asn) or Gln-tRNA(Gln) through the transamidation of misacylated Asp-tRNA(Asn) or Glu-tRNA(Gln) in organisms which lack either or both of asparaginyl-tRNA or glutaminyl-tRNA synthetases. The reaction takes place in the presence of glutamine and ATP through an activated phospho-Asp-tRNA(Asn) or phospho-Glu-tRNA(Gln). The polypeptide is Aspartyl/glutamyl-tRNA(Asn/Gln) amidotransferase subunit B (Tropheryma whipplei (strain TW08/27) (Whipple's bacillus)).